The sequence spans 101 residues: RNA-binding protein Hfq (101 aa).

One can recognise a Sm domain in the interval 9–68; the sequence is DPFLNALRRERVPVSIYLVNGIKLQGQVESFDQFVILLKNTVSQMVYKHAISTVVPSRPV. The segment at 63–101 is disordered; the sequence is VPSRPVSHHSNNPSGSTNNYHGSNPSAPQQPQQDSDDAE. Positions 70-86 are enriched in polar residues; the sequence is HHSNNPSGSTNNYHGSN.

It belongs to the Hfq family. As to quaternary structure, homohexamer.

In terms of biological role, RNA chaperone that binds small regulatory RNA (sRNAs) and mRNAs to facilitate mRNA translational regulation in response to envelope stress, environmental stress and changes in metabolite concentrations. Also binds with high specificity to tRNAs. Positively regulates the expression of the yst gene for heat-stable enterotoxin (Y-ST). The protein is RNA-binding protein Hfq of Yersinia enterocolitica.